The following is a 284-amino-acid chain: Acetyl-coenzyme A carboxylase carboxyl transferase subunit beta (284 aa).

In terms of domain architecture, CoA carboxyltransferase N-terminal spans 24–284 (GLWYKSPTGK…LDLILNNEVR (261 aa)).

Belongs to the AccD/PCCB family. In terms of assembly, acetyl-CoA carboxylase is a heterohexamer composed of biotin carboxyl carrier protein (AccB), biotin carboxylase (AccC) and two subunits each of ACCase subunit alpha (AccA) and ACCase subunit beta (AccD).

It localises to the cytoplasm. It carries out the reaction N(6)-carboxybiotinyl-L-lysyl-[protein] + acetyl-CoA = N(6)-biotinyl-L-lysyl-[protein] + malonyl-CoA. Its pathway is lipid metabolism; malonyl-CoA biosynthesis; malonyl-CoA from acetyl-CoA: step 1/1. Its function is as follows. Component of the acetyl coenzyme A carboxylase (ACC) complex. Biotin carboxylase (BC) catalyzes the carboxylation of biotin on its carrier protein (BCCP) and then the CO(2) group is transferred by the transcarboxylase to acetyl-CoA to form malonyl-CoA. This Flavobacterium psychrophilum (strain ATCC 49511 / DSM 21280 / CIP 103535 / JIP02/86) protein is Acetyl-coenzyme A carboxylase carboxyl transferase subunit beta.